The following is a 237-amino-acid chain: Ribosomal RNA small subunit methyltransferase G (237 aa).

Residues Gly-78, Phe-83, 129–130, and Arg-148 each bind S-adenosyl-L-methionine; that span reads AE.

This sequence belongs to the methyltransferase superfamily. RNA methyltransferase RsmG family.

It localises to the cytoplasm. Its function is as follows. Specifically methylates the N7 position of a guanine in 16S rRNA. In Streptococcus pyogenes serotype M18 (strain MGAS8232), this protein is Ribosomal RNA small subunit methyltransferase G.